The sequence spans 383 residues: Prokineticin receptor 2 (383 aa).

The Extracellular segment spans residues M1–I54. N7 and N27 each carry an N-linked (GlcNAc...) asparagine glycan. A helical transmembrane segment spans residues V55–I75. At A76–N89 the chain is on the cytoplasmic side. Residues L90 to E110 traverse the membrane as a helical segment. Over M111 to T136 the chain is Extracellular. Cysteines 128 and 207 form a disulfide. Residues V137–I157 traverse the membrane as a helical segment. Residues V158–S170 are Cytoplasmic-facing. The chain crosses the membrane as a helical span at residues F171–T191. At T192–Y222 the chain is on the extracellular side. A helical membrane pass occupies residues F223–A243. The Cytoplasmic portion of the chain corresponds to R244–T272. The chain crosses the membrane as a helical span at residues V273 to F293. Over T294–T312 the chain is Extracellular. A helical membrane pass occupies residues A313 to V333. The Cytoplasmic portion of the chain corresponds to T334–K383.

It belongs to the G-protein coupled receptor 1 family. In terms of assembly, homodimer. As to expression, abundantly expressed in the CNS and reproductive organs with the highest levels in the cerebrum, cerebellum, testis and ovary.

It is found in the cell membrane. In terms of biological role, receptor for prokineticin 2. Exclusively coupled to the G(q) subclass of heteromeric G proteins. Activation leads to mobilization of calcium, stimulation of phosphoinositide turnover and activation of p44/p42 mitogen-activated protein kinase. This is Prokineticin receptor 2 (Prokr2) from Rattus norvegicus (Rat).